Reading from the N-terminus, the 417-residue chain is Adrenocortical dysplasia protein homolog (417 aa).

Positions 11–13 (PWI) match the PWI motif. Phosphoserine is present on serine 25. The interval 156-245 (ESASSSAGLT…SSIDSSQKAQ (90 aa)) is interaction with POT1. 2 stretches are compositionally biased toward polar residues: residues 237–250 (SIDSSQKAQENPAS) and 259–292 (SGASVSLLSALPTSDPGQKDNSQPPPTVCSTSPR). The tract at residues 237-309 (SIDSSQKAQE…PCSSTPSSPL (73 aa)) is disordered. Residues 296-309 (PSSTPCSSTPSSPL) are compositionally biased toward low complexity. Residues serine 313 and serine 317 each carry the phosphoserine modification. A Glycyl lysine isopeptide (Lys-Gly) (interchain with G-Cter in SUMO2) cross-link involves residue lysine 348.

In terms of assembly, component of the shelterin complex (telosome) composed of TERF1, TERF2, TINF2, TERF2IP ACD and POT1. Forms heterodimers with POT1. Identified in a complex with POT1 and single-stranded telomeric DNA. Interacts with STN1 and TINF2.

The protein localises to the nucleus. The protein resides in the chromosome. It localises to the telomere. In terms of biological role, component of the shelterin complex (telosome) that is involved in the regulation of telomere length and protection. Shelterin associates with arrays of double-stranded TTAGGG repeats added by telomerase and protects chromosome ends. Without its protective activity, telomeres are no longer hidden from the DNA damage surveillance and chromosome ends are inappropriately processed by DNA repair pathways. Promotes binding of POT1 to single-stranded telomeric DNA. Modulates the inhibitory effects of POT1 on telomere elongation. The ACD-POT1 heterodimer enhances telomere elongation by recruiting telomerase to telomeres and increasing its processivity. May play a role in organogenesis. This is Adrenocortical dysplasia protein homolog from Rattus norvegicus (Rat).